Reading from the N-terminus, the 450-residue chain is Putative nucleolar protein 5-3 (450 aa).

Positions 252–370 (IAPNLTALVG…LEARLRNLEG (119 aa)) constitute a Nop domain. The segment at 375–423 (ACEEEEEVNDKDTKKEADDEEEPKTEECSKKRKKEAELETVEDPAKKSK) is disordered. The segment covering 399–423 (TEECSKKRKKEAELETVEDPAKKSK) has biased composition (basic and acidic residues).

The protein belongs to the NOP5/NOP56 family.

It localises to the nucleus. The protein resides in the nucleolus. Functionally, required for 60S ribosomal subunit biogenesis. The protein is Putative nucleolar protein 5-3 (NOP5-3) of Arabidopsis thaliana (Mouse-ear cress).